We begin with the raw amino-acid sequence, 178 residues long: Interleukin-1 receptor antagonist protein (178 aa).

The first 26 residues, 1–26 (MEICWGPYSHLISLLLILLFHSEAAC), serve as a signal peptide directing secretion. Cysteines 92 and 142 form a disulfide. N-linked (GlcNAc...) asparagine glycosylation occurs at N110.

The protein belongs to the IL-1 family.

Its subcellular location is the secreted. It is found in the cytoplasm. In terms of biological role, anti-inflammatory antagonist of interleukin-1 family of proinflammatory cytokines such as interleukin-1beta/IL1B and interleukin-1alpha/IL1A. Protects from immune dysregulation and uncontrolled systemic inflammation triggered by IL1 for a range of innate stimulatory agents such as pathogens. In Mus musculus (Mouse), this protein is Interleukin-1 receptor antagonist protein (Il1rn).